The following is a 109-amino-acid chain: ATP-dependent Clp protease adapter protein ClpS (109 aa).

This sequence belongs to the ClpS family. In terms of assembly, binds to the N-terminal domain of the chaperone ClpA.

Involved in the modulation of the specificity of the ClpAP-mediated ATP-dependent protein degradation. The chain is ATP-dependent Clp protease adapter protein ClpS from Lawsonia intracellularis (strain PHE/MN1-00).